The chain runs to 262 residues: Small ribosomal subunit protein eS4x (262 aa).

The S4 RNA-binding domain maps to 42-104 (LPLVLIIRNR…TNENFRLLYD (63 aa)).

The protein belongs to the eukaryotic ribosomal protein eS4 family.

It localises to the cytoplasm. The polypeptide is Small ribosomal subunit protein eS4x (RPS4D) (Arabidopsis thaliana (Mouse-ear cress)).